Here is a 546-residue protein sequence, read N- to C-terminus: Cytokine-like nuclear factor N-PAC (546 aa).

A PWWP domain is found at 8 to 66 (LGDLVWGKLGRYPPWPGKIVNPPKDLKKPRGKKCFFVKFFGTEDHAWIKVEQLKPYHAH). Composition is skewed to basic and acidic residues over residues 91-145 (RRAK…EGKK) and 161-181 (RAQE…KDLT). The disordered stretch occupies residues 91 to 187 (RRAKGKDQTS…KDLTIPESST (97 aa)). Serine 130 is modified (phosphoserine). Lysine 135 is covalently cross-linked (Glycyl lysine isopeptide (Lys-Gly) (interchain with G-Cter in SUMO2)). Serine 166 is modified (phosphoserine). Residues 167 to 179 (PRKRGRPPKDEKD) constitute a DNA-binding region (a.T hook). Glycyl lysine isopeptide (Lys-Gly) (interchain with G-Cter in SUMO2) cross-links involve residues lysine 175, lysine 178, lysine 200, and lysine 210. The segment at 213–216 (DPHF) is interaction with histone H3. Residues 215–224 (HFHHFLLSQT) form an interaction with KDM1B region. Glycyl lysine isopeptide (Lys-Gly) (interchain with G-Cter in SUMO2) cross-links involve residues lysine 226, lysine 236, lysine 239, and lysine 268. The dehydrogenase domain stretch occupies residues 260-546 (GSITPTDKKI…MSAVYRAYIH (287 aa)). Residue 270–284 (GFLGLGLMGSGIVSN) participates in NAD(+) binding. A Glycyl lysine isopeptide (Lys-Gly) (interchain with G-Cter in SUMO2) cross-link involves residue lysine 301. Residues threonine 355 and lysine 498 each contribute to the NAD(+) site. Serine 533 is subject to Phosphoserine.

It belongs to the HIBADH-related family. NP60 subfamily. Homotetramere. Interacts with MAPK14. Interacts with KDM1B at nucleosomes; this interaction stimulates H3K4me1 and H3K4me2 demethylation. Binds to mononucleosomes. Interacts with GATA4; the interaction is required for a synergistic activation of GATA4 target genes transcription.

Its subcellular location is the nucleus. The protein resides in the chromosome. Cytokine-like nuclear factor with chromatin gene reader activity involved in chromatin modification and regulation of gene expression. Acts as a nucleosome-destabilizing factor that is recruited to genes during transcriptional activation. Recognizes and binds histone H3 without a preference for specific epigenetic markers and also binds DNA. Interacts with KDM1B and promotes its histone demethylase activity by facilitating the capture of H3 tails, they form a multifunctional enzyme complex that modifies transcribed chromatin and facilitates Pol II transcription through nucleosomes. Stimulates the acetylation of 'Lys-56' of nucleosomal histone H3 (H3K56ac) by EP300. With GATA4, co-binds a defined set of heart development genes and coregulates their expression during cardiomyocyte differentiation. Regulates p38 MAP kinase activity by mediating stress activation of MAPK14/p38alpha and specifically regulating MAPK14 signaling. Indirectly promotes phosphorylation of MAPK14 and activation of ATF2. The phosphorylation of MAPK14 requires upstream activity of MAP2K4 and MAP2K6. The chain is Cytokine-like nuclear factor N-PAC from Mus musculus (Mouse).